The chain runs to 230 residues: Cytochrome c oxidase subunit 2 (230 aa).

Topologically, residues 1 to 14 (MAHPSQLGFQDAAS) are mitochondrial intermembrane. The chain crosses the membrane as a helical span at residues 15–45 (PVMEELIHFHDHTLMIVFLISTLVLYIITAM). The Mitochondrial matrix segment spans residues 46 to 59 (VSTKLTNKYILDSQ). Residues 60-87 (EIEIVWTILPAIILIMIALPSLRILYLM) traverse the membrane as a helical segment. The Mitochondrial intermembrane portion of the chain corresponds to 88 to 230 (DEINDPHLTI…TWSSLMLEEA (143 aa)). Residues H161, C196, E198, C200, H204, and M207 each coordinate Cu cation. A Mg(2+)-binding site is contributed by E198.

Belongs to the cytochrome c oxidase subunit 2 family. In terms of assembly, component of the cytochrome c oxidase (complex IV, CIV), a multisubunit enzyme composed of 14 subunits. The complex is composed of a catalytic core of 3 subunits MT-CO1, MT-CO2 and MT-CO3, encoded in the mitochondrial DNA, and 11 supernumerary subunits COX4I, COX5A, COX5B, COX6A, COX6B, COX6C, COX7A, COX7B, COX7C, COX8 and NDUFA4, which are encoded in the nuclear genome. The complex exists as a monomer or a dimer and forms supercomplexes (SCs) in the inner mitochondrial membrane with NADH-ubiquinone oxidoreductase (complex I, CI) and ubiquinol-cytochrome c oxidoreductase (cytochrome b-c1 complex, complex III, CIII), resulting in different assemblies (supercomplex SCI(1)III(2)IV(1) and megacomplex MCI(2)III(2)IV(2)). Found in a complex with TMEM177, COA6, COX18, COX20, SCO1 and SCO2. Interacts with TMEM177 in a COX20-dependent manner. Interacts with COX20. Interacts with COX16. Cu cation serves as cofactor.

It localises to the mitochondrion inner membrane. It carries out the reaction 4 Fe(II)-[cytochrome c] + O2 + 8 H(+)(in) = 4 Fe(III)-[cytochrome c] + 2 H2O + 4 H(+)(out). In terms of biological role, component of the cytochrome c oxidase, the last enzyme in the mitochondrial electron transport chain which drives oxidative phosphorylation. The respiratory chain contains 3 multisubunit complexes succinate dehydrogenase (complex II, CII), ubiquinol-cytochrome c oxidoreductase (cytochrome b-c1 complex, complex III, CIII) and cytochrome c oxidase (complex IV, CIV), that cooperate to transfer electrons derived from NADH and succinate to molecular oxygen, creating an electrochemical gradient over the inner membrane that drives transmembrane transport and the ATP synthase. Cytochrome c oxidase is the component of the respiratory chain that catalyzes the reduction of oxygen to water. Electrons originating from reduced cytochrome c in the intermembrane space (IMS) are transferred via the dinuclear copper A center (CU(A)) of subunit 2 and heme A of subunit 1 to the active site in subunit 1, a binuclear center (BNC) formed by heme A3 and copper B (CU(B)). The BNC reduces molecular oxygen to 2 water molecules using 4 electrons from cytochrome c in the IMS and 4 protons from the mitochondrial matrix. The polypeptide is Cytochrome c oxidase subunit 2 (MT-CO2) (Scyliorhinus canicula (Small-spotted catshark)).